A 1196-amino-acid polypeptide reads, in one-letter code: DNA polymerase beta (1196 aa).

This sequence belongs to the DNA polymerase type-B family.

It carries out the reaction DNA(n) + a 2'-deoxyribonucleoside 5'-triphosphate = DNA(n+1) + diphosphate. In terms of biological role, DNA-directed DNA polymerase involved in viral DNA replication. This is DNA polymerase beta from African swine fever virus (isolate Pig/Kenya/KEN-50/1950) (ASFV).